The sequence spans 350 residues: Uroporphyrinogen decarboxylase (350 aa).

Substrate is bound by residues Arg-28–Arg-32, Asp-78, Tyr-155, Ser-210, and His-325.

Belongs to the uroporphyrinogen decarboxylase family. As to quaternary structure, homodimer.

Its subcellular location is the cytoplasm. It carries out the reaction uroporphyrinogen III + 4 H(+) = coproporphyrinogen III + 4 CO2. Its pathway is porphyrin-containing compound metabolism; protoporphyrin-IX biosynthesis; coproporphyrinogen-III from 5-aminolevulinate: step 4/4. Its function is as follows. Catalyzes the decarboxylation of four acetate groups of uroporphyrinogen-III to yield coproporphyrinogen-III. This chain is Uroporphyrinogen decarboxylase, found in Trichormus variabilis (strain ATCC 29413 / PCC 7937) (Anabaena variabilis).